The chain runs to 530 residues: Ubiquitin carboxyl-terminal hydrolase 17-like protein 1 (530 aa).

In terms of domain architecture, USP spans 80–375; the sequence is AGLQNMGNTC…QAYVLFYIQK (296 aa). Catalysis depends on cysteine 89, which acts as the Nucleophile. Histidine 334 functions as the Proton acceptor in the catalytic mechanism. Composition is skewed to basic and acidic residues over residues 382–392 and 398–411; these read SESVSRGREPR and DTDRRAKQGELKRD. The disordered stretch occupies residues 382 to 411; it reads SESVSRGREPRALGAEDTDRRAKQGELKRD.

This sequence belongs to the peptidase C19 family. USP17 subfamily.

The protein resides in the nucleus. The protein localises to the endoplasmic reticulum. The enzyme catalyses Thiol-dependent hydrolysis of ester, thioester, amide, peptide and isopeptide bonds formed by the C-terminal Gly of ubiquitin (a 76-residue protein attached to proteins as an intracellular targeting signal).. In terms of biological role, deubiquitinating enzyme that removes conjugated ubiquitin from specific proteins to regulate different cellular processes that may include cell proliferation, progression through the cell cycle, apoptosis, cell migration, and the cellular response to viral infection. The polypeptide is Ubiquitin carboxyl-terminal hydrolase 17-like protein 1 (USP17L1) (Homo sapiens (Human)).